The following is a 51-amino-acid chain: Large ribosomal subunit protein eL39x (51 aa).

The protein belongs to the eukaryotic ribosomal protein eL39 family.

This chain is Large ribosomal subunit protein eL39x (RPL39C), found in Oryza sativa subsp. japonica (Rice).